Consider the following 249-residue polypeptide: ATP synthase subunit a, chloroplastic (249 aa).

5 consecutive transmembrane segments (helical) span residues 38–58, 97–117, 136–156, 201–221, and 222–242; these read AQVL…AVLA, VPFI…GALL, INTT…AGLH, LVVA…MMFL, and GLFT…AYIG.

The protein belongs to the ATPase A chain family. F-type ATPases have 2 components, CF(1) - the catalytic core - and CF(0) - the membrane proton channel. CF(1) has five subunits: alpha(3), beta(3), gamma(1), delta(1), epsilon(1). CF(0) has four main subunits: a, b, b' and c.

It is found in the plastid. The protein resides in the chloroplast thylakoid membrane. Key component of the proton channel; it plays a direct role in the translocation of protons across the membrane. The polypeptide is ATP synthase subunit a, chloroplastic (Physcomitrium patens (Spreading-leaved earth moss)).